We begin with the raw amino-acid sequence, 290 residues long: Light-independent protochlorophyllide reductase iron-sulfur ATP-binding protein (290 aa).

ATP-binding positions include 34–39 (GIGKST) and Lys63. Ser38 serves as a coordination point for Mg(2+). The [4Fe-4S] cluster site is built by Cys119 and Cys153. Residues 204–205 (NR) and 228–230 (PDL) each bind ATP.

This sequence belongs to the NifH/BchL/ChlL family. Homodimer. Protochlorophyllide reductase is composed of three subunits; BchL, BchN and BchB. It depends on [4Fe-4S] cluster as a cofactor.

The catalysed reaction is chlorophyllide a + oxidized 2[4Fe-4S]-[ferredoxin] + 2 ADP + 2 phosphate = protochlorophyllide a + reduced 2[4Fe-4S]-[ferredoxin] + 2 ATP + 2 H2O. It functions in the pathway porphyrin-containing compound metabolism; bacteriochlorophyll biosynthesis (light-independent). Functionally, component of the dark-operative protochlorophyllide reductase (DPOR) that uses Mg-ATP and reduced ferredoxin to reduce ring D of protochlorophyllide (Pchlide) to form chlorophyllide a (Chlide). This reaction is light-independent. The L component serves as a unique electron donor to the NB-component of the complex, and binds Mg-ATP. In Rhodospirillum rubrum, this protein is Light-independent protochlorophyllide reductase iron-sulfur ATP-binding protein.